Here is a 250-residue protein sequence, read N- to C-terminus: MIIIKNDTEIEYMRQAGKIVGETLNMLEKAAKPGVTTADLDRLAEDFIKKYNAIPSFKGYGGFPASICTSINEEVIHGIPSKHRVLHEGDIISVDCGAILNGYQGDAARTFAIGEISEEAAKLIKVTKESFFKGVEKAVIGNRLTDISHSIQEYVESFGYGVVRDYVGHGIGKEMHEDPEVPNYGRPGRGPKLVHGMVLAIEPMVDVGTYMVKTQSNDWTVVTQDGSLAAHYENTVAILDNGPEILTLCE.

A substrate-binding site is contributed by His77. Residues Asp95, Asp106, and His169 each contribute to the a divalent metal cation site. Position 176 (His176) interacts with substrate. A divalent metal cation-binding residues include Glu202 and Glu233.

The protein belongs to the peptidase M24A family. Methionine aminopeptidase type 1 subfamily. As to quaternary structure, monomer. Co(2+) is required as a cofactor. Requires Zn(2+) as cofactor. Mn(2+) serves as cofactor. The cofactor is Fe(2+).

The enzyme catalyses Release of N-terminal amino acids, preferentially methionine, from peptides and arylamides.. In terms of biological role, removes the N-terminal methionine from nascent proteins. The N-terminal methionine is often cleaved when the second residue in the primary sequence is small and uncharged (Met-Ala-, Cys, Gly, Pro, Ser, Thr, or Val). Requires deformylation of the N(alpha)-formylated initiator methionine before it can be hydrolyzed. In Clostridium acetobutylicum (strain ATCC 824 / DSM 792 / JCM 1419 / IAM 19013 / LMG 5710 / NBRC 13948 / NRRL B-527 / VKM B-1787 / 2291 / W), this protein is Methionine aminopeptidase.